Here is a 122-residue protein sequence, read N- to C-terminus: Ribosome-binding factor A (122 aa).

The protein belongs to the RbfA family. Monomer. Binds 30S ribosomal subunits, but not 50S ribosomal subunits or 70S ribosomes.

The protein resides in the cytoplasm. Functionally, one of several proteins that assist in the late maturation steps of the functional core of the 30S ribosomal subunit. Associates with free 30S ribosomal subunits (but not with 30S subunits that are part of 70S ribosomes or polysomes). Required for efficient processing of 16S rRNA. May interact with the 5'-terminal helix region of 16S rRNA. The protein is Ribosome-binding factor A of Cupriavidus necator (strain ATCC 17699 / DSM 428 / KCTC 22496 / NCIMB 10442 / H16 / Stanier 337) (Ralstonia eutropha).